The chain runs to 888 residues: Dilute domain-containing protein YPR089W (888 aa).

The Dilute domain maps to 360–745; it reads DIVLQSYWLS…KKFLNNKIKD (386 aa). Disordered stretches follow at residues 462-504, 805-827, and 865-888; these read KEQQ…NNSS, KQRQ…TGDE, and LNIP…QNPW. 2 stretches are compositionally biased toward polar residues: residues 809-823 and 867-880; these read NEPQ…TSDF and IPSS…WSNN.

It is found in the golgi apparatus. In Saccharomyces cerevisiae (strain ATCC 204508 / S288c) (Baker's yeast), this protein is Dilute domain-containing protein YPR089W.